The primary structure comprises 67 residues: Large ribosomal subunit protein bL35 (67 aa).

Residues 1-11 are compositionally biased toward basic residues; that stretch reads MPKLKTRKAAA. Residues 1-22 form a disordered region; sequence MPKLKTRKAAAKRFEATGSGKK.

This sequence belongs to the bacterial ribosomal protein bL35 family.

This is Large ribosomal subunit protein bL35 from Microcystis aeruginosa (strain NIES-843 / IAM M-2473).